Here is a 342-residue protein sequence, read N- to C-terminus: MGSWTSDPAPPMAEVFNSAVAAVAIGAAWEVGLLDAVKDQKKVDVFQFAAENDLDRPSVQGLVAALAVVQVVALEQNTVVAGRQLEEAYRTKSLFHWLCLGSGGLFSRMQYVLRNEHRTGDFHRRDPAAIAHACHDINKQYFDPAFWAAMDGLDYPVQSVVDLGCGSGQRLMQILDRHPQASAIGIDVAGPAIQVAARDAVARGFGNRLVFREGDAREVSYRDEFEHVDLLTCFMMGHDFWPRDKCIATLQRLRRVFPAARRLLLGDATRILLDTPGGQQAVRNGTVPIFTLGFEVGHAMMGVYLPTIDEWEGVFAEGGWRCVKKHLIESLSLSVVFELEHA.

Belongs to the methyltransferase superfamily.

It functions in the pathway secondary metabolite biosynthesis. Its function is as follows. Methyltransferase; part of the gene cluster that mediates the biosynthesis of the unguisins, gamma-aminobutyric acid (GABA)-containing fungal cyclic heptapeptides with the amino acid sequence cyclo-(D-Ala1-D-Val2-L-Leu3-beta-MePhe4-D-Ala5-D-Trp6-GABA7) for unguisin H and cyclo-(D-Ala1-D-Ala2-L-Leu3-beta-MePhe4-D-Ala5-D-Trp6-GABA7) for unguisin I. Within the pathway, the methyltransferase ungE' is probably involved in the synthesis of the (2R,3R)-beta-methylphenylalanine residue incorporated by the module 4 of the nonribosomal peptide synthetase (NRPS) ungA'. The alanine racemase ungC' catalyzes the interconversion of L-alanine and D-alanine, providing the D-alanine which is accepted by the first adenylation domain of ungA'. UngA' is the main enzyme within the cluster which condenses the 7 residues using its respective 7 modules. The terminal condensation domain (Ct) is involved in cyclization with D-alanine and thereby releasing of unguisins H and I. Finally, the hydrolase ungD' catalyzes the hydrolysis between the D-tryptophan and GABA residues of unguisins H and I to produce the corresponding linear peptides. The protein is Methyltransferase ungE' of Aspergillus campestris (strain IBT 28561).